Reading from the N-terminus, the 455-residue chain is Probable glucarate dehydratase (455 aa).

The substrate site is built by His42, Thr113, Tyr160, and Lys215. The Proton acceptor role is filled by Lys217. Positions 245, 276, and 299 each coordinate Mg(2+). A substrate-binding site is contributed by Asp245 to Asn247. Substrate is bound by residues Asn299, His349–Asn351, His378, and Arg431. His349 acts as the Proton acceptor in catalysis.

The protein belongs to the mandelate racemase/muconate lactonizing enzyme family. GlucD subfamily. Requires Mg(2+) as cofactor.

It catalyses the reaction D-glucarate = 5-dehydro-4-deoxy-D-glucarate + H2O. It participates in carbohydrate acid metabolism; D-glucarate degradation; 2,5-dioxopentanoate from D-glucarate: step 1/2. Catalyzes the dehydration of glucarate to 5-keto-4-deoxy-D-glucarate (5-kdGluc). This Bacillus subtilis (strain 168) protein is Probable glucarate dehydratase (gudD).